Consider the following 464-residue polypeptide: Colanic acid biosynthesis protein WcaM (464 aa).

The protein operates within slime biogenesis; slime polysaccharide biosynthesis. This is Colanic acid biosynthesis protein WcaM (wcaM) from Shigella flexneri.